Reading from the N-terminus, the 38-residue chain is Photosystem II reaction center protein L (38 aa).

A helical membrane pass occupies residues 17 to 37 (SLYWGLLLMFVLAVLFSSYFF).

It belongs to the PsbL family. As to quaternary structure, PSII is composed of 1 copy each of membrane proteins PsbA, PsbB, PsbC, PsbD, PsbE, PsbF, PsbH, PsbI, PsbJ, PsbK, PsbL, PsbM, PsbT, PsbX, PsbY, PsbZ, Psb30/Ycf12, at least 3 peripheral proteins of the oxygen-evolving complex and a large number of cofactors. It forms dimeric complexes.

It localises to the plastid. It is found in the chloroplast thylakoid membrane. One of the components of the core complex of photosystem II (PSII). PSII is a light-driven water:plastoquinone oxidoreductase that uses light energy to abstract electrons from H(2)O, generating O(2) and a proton gradient subsequently used for ATP formation. It consists of a core antenna complex that captures photons, and an electron transfer chain that converts photonic excitation into a charge separation. This subunit is found at the monomer-monomer interface and is required for correct PSII assembly and/or dimerization. The polypeptide is Photosystem II reaction center protein L (Emiliania huxleyi (Coccolithophore)).